We begin with the raw amino-acid sequence, 364 residues long: Alanine racemase (364 aa).

Residue lysine 35 is the Proton acceptor; specific for D-alanine of the active site. Lysine 35 carries the N6-(pyridoxal phosphate)lysine modification. Arginine 132 contributes to the substrate binding site. Tyrosine 260 (proton acceptor; specific for L-alanine) is an active-site residue. Methionine 308 is a substrate binding site.

It belongs to the alanine racemase family. Pyridoxal 5'-phosphate serves as cofactor.

The enzyme catalyses L-alanine = D-alanine. It participates in amino-acid biosynthesis; D-alanine biosynthesis; D-alanine from L-alanine: step 1/1. Catalyzes the interconversion of L-alanine and D-alanine. May also act on other amino acids. The polypeptide is Alanine racemase (alr) (Acidithiobacillus ferrooxidans (strain ATCC 23270 / DSM 14882 / CIP 104768 / NCIMB 8455) (Ferrobacillus ferrooxidans (strain ATCC 23270))).